The chain runs to 227 residues: ATP synthase F(0) complex subunit a (227 aa).

6 helical membrane-spanning segments follow: residues 14–34, 73–93, 98–118, 137–157, 179–199, and 203–223; these read FLGIPMILMALALPWLLIPTP, LASLMMFLLTLNMLGLMPYIF, QLSLNLGLAVPLWLATVLIGM, ALIPILIIMQTISLFIRPLAL, VFVLMPMMPVVAILTAVLLLL, and LEVAVAMIQAYVFILLLSLYL.

Belongs to the ATPase A chain family. Component of the ATP synthase complex composed at least of ATP5F1A/subunit alpha, ATP5F1B/subunit beta, ATP5MC1/subunit c (homooctomer), MT-ATP6/subunit a, MT-ATP8/subunit 8, ATP5ME/subunit e, ATP5MF/subunit f, ATP5MG/subunit g, ATP5MK/subunit k, ATP5MJ/subunit j, ATP5F1C/subunit gamma, ATP5F1D/subunit delta, ATP5F1E/subunit epsilon, ATP5PF/subunit F6, ATP5PB/subunit b, ATP5PD/subunit d, ATP5PO/subunit OSCP. ATP synthase complex consists of a soluble F(1) head domain (subunits alpha(3) and beta(3)) - the catalytic core - and a membrane F(0) domain - the membrane proton channel (subunits c, a, 8, e, f, g, k and j). These two domains are linked by a central stalk (subunits gamma, delta, and epsilon) rotating inside the F1 region and a stationary peripheral stalk (subunits F6, b, d, and OSCP). Interacts with DNAJC30; interaction is direct.

The protein localises to the mitochondrion inner membrane. The enzyme catalyses H(+)(in) = H(+)(out). Subunit a, of the mitochondrial membrane ATP synthase complex (F(1)F(0) ATP synthase or Complex V) that produces ATP from ADP in the presence of a proton gradient across the membrane which is generated by electron transport complexes of the respiratory chain. ATP synthase complex consist of a soluble F(1) head domain - the catalytic core - and a membrane F(1) domain - the membrane proton channel. These two domains are linked by a central stalk rotating inside the F(1) region and a stationary peripheral stalk. During catalysis, ATP synthesis in the catalytic domain of F(1) is coupled via a rotary mechanism of the central stalk subunits to proton translocation. With the subunit c (ATP5MC1), forms the proton-conducting channel in the F(0) domain, that contains two crucial half-channels (inlet and outlet) that facilitate proton movement from the mitochondrial intermembrane space (IMS) into the matrix. Protons are taken up via the inlet half-channel and released through the outlet half-channel, following a Grotthuss mechanism. This chain is ATP synthase F(0) complex subunit a, found in Gadus morhua (Atlantic cod).